The sequence spans 407 residues: Probable tRNA sulfurtransferase (407 aa).

A THUMP domain is found at 61–165 (NEITNRLSKI…LDAIYMYEEV (105 aa)). ATP contacts are provided by residues 183 to 184 (ML), 208 to 209 (HF), arginine 265, glycine 287, and glutamine 296.

This sequence belongs to the ThiI family.

Its subcellular location is the cytoplasm. The catalysed reaction is [ThiI sulfur-carrier protein]-S-sulfanyl-L-cysteine + a uridine in tRNA + 2 reduced [2Fe-2S]-[ferredoxin] + ATP + H(+) = [ThiI sulfur-carrier protein]-L-cysteine + a 4-thiouridine in tRNA + 2 oxidized [2Fe-2S]-[ferredoxin] + AMP + diphosphate. It carries out the reaction [ThiS sulfur-carrier protein]-C-terminal Gly-Gly-AMP + S-sulfanyl-L-cysteinyl-[cysteine desulfurase] + AH2 = [ThiS sulfur-carrier protein]-C-terminal-Gly-aminoethanethioate + L-cysteinyl-[cysteine desulfurase] + A + AMP + 2 H(+). Its pathway is cofactor biosynthesis; thiamine diphosphate biosynthesis. Its function is as follows. Catalyzes the ATP-dependent transfer of a sulfur to tRNA to produce 4-thiouridine in position 8 of tRNAs, which functions as a near-UV photosensor. Also catalyzes the transfer of sulfur to the sulfur carrier protein ThiS, forming ThiS-thiocarboxylate. This is a step in the synthesis of thiazole, in the thiamine biosynthesis pathway. The sulfur is donated as persulfide by IscS. This chain is Probable tRNA sulfurtransferase, found in Staphylococcus aureus (strain MRSA252).